The following is a 290-amino-acid chain: Lectin-related protein (290 aa).

Residues Ala1–Ser36 form the signal peptide. Asn119, Asn147, and Asn152 each carry an N-linked (GlcNAc...) asparagine glycan. Positions 161 and 163 each coordinate Mn(2+). 3 residues coordinate Ca(2+): Asp163, Asn167, and Asp170. Mn(2+) contacts are provided by Asp170 and His175.

The protein belongs to the leguminous lectin family. In terms of assembly, homotetramer.

Does not have any carbohydrate binding or agglutination activity. The polypeptide is Lectin-related protein (Cladrastis kentukea (Yellow wood)).